A 162-amino-acid polypeptide reads, in one-letter code: Probable chorismate pyruvate-lyase (162 aa).

Substrate is bound by residues arginine 54, leucine 92, and glutamate 149.

Belongs to the UbiC family.

The protein resides in the cytoplasm. It catalyses the reaction chorismate = 4-hydroxybenzoate + pyruvate. It participates in cofactor biosynthesis; ubiquinone biosynthesis. Functionally, removes the pyruvyl group from chorismate, with concomitant aromatization of the ring, to provide 4-hydroxybenzoate (4HB) for the ubiquinone pathway. This chain is Probable chorismate pyruvate-lyase, found in Methylococcus capsulatus (strain ATCC 33009 / NCIMB 11132 / Bath).